Consider the following 433-residue polypeptide: PC-esterase domain-containing protein 1B (433 aa).

The disordered stretch occupies residues 386-433 (PPCHQRQAPVVHRGFPRHFARGPYSNPWRDRPRRPPKHSPAGLESRPQ).

This sequence belongs to the PC-esterase family.

This is PC-esterase domain-containing protein 1B (Pced1b) from Mus musculus (Mouse).